The chain runs to 351 residues: Glycerol-1-phosphate dehydrogenase [NAD(P)+] (351 aa).

NAD(+) is bound by residues 97–101 and 119–122; these read GTVID and TSPS. Asp-124 provides a ligand contact to substrate. Ser-128 provides a ligand contact to NAD(+). Residue Asp-171 participates in substrate binding. Zn(2+)-binding residues include Asp-171 and His-251. His-255 lines the substrate pocket. Position 267 (His-267) interacts with Zn(2+).

It belongs to the glycerol-1-phosphate dehydrogenase family. As to quaternary structure, homodimer. Zn(2+) serves as cofactor.

It localises to the cytoplasm. The catalysed reaction is sn-glycerol 1-phosphate + NAD(+) = dihydroxyacetone phosphate + NADH + H(+). It catalyses the reaction sn-glycerol 1-phosphate + NADP(+) = dihydroxyacetone phosphate + NADPH + H(+). Its pathway is membrane lipid metabolism; glycerophospholipid metabolism. Functionally, catalyzes the NAD(P)H-dependent reduction of dihydroxyacetonephosphate (DHAP or glycerone phosphate) to glycerol 1-phosphate (G1P). The G1P thus generated is used as the glycerophosphate backbone of phospholipids in the cellular membranes of Archaea. The sequence is that of Glycerol-1-phosphate dehydrogenase [NAD(P)+] from Sulfolobus acidocaldarius (strain ATCC 33909 / DSM 639 / JCM 8929 / NBRC 15157 / NCIMB 11770).